We begin with the raw amino-acid sequence, 258 residues long: MSPAIALAFLPLVVTLLVRYRHHFRLLVRTVLLRSFRDCLSGLRIEERAFSYVITHALPGDPGHILTTLDHWSSCCEYLSHMGPIKGQILMRLVEEKAPACVLELGTHCGYSTLLIARALPPGSRLLTVERDSRTAAVAEKVIRLAGFDEQMVELIAGSSEEVIPRLRAQHQLNRADLVLLAHRPRYYLRDLQLLEAHALLPHGATVLADHVLFPGAPRFLQYTKSCGRYRCRLHHTSLPDFPAIKDGIAQLTYTGPG.

Residues glutamate 104, 106-107 (GT), serine 112, glutamate 130, and serine 160 each bind S-adenosyl-L-methionine.

The protein belongs to the class I-like SAM-binding methyltransferase superfamily. Cation-dependent O-methyltransferase family. As to quaternary structure, interacts with LHFPL5, PCDH15, TMC1, TMC2 and TMIE. Interacts directly with TMC1. The interaction of TOMT with TMC1 and TMC2 is required for the transportation of TMC1/2 into the stereocilia of hair cells.

Its subcellular location is the cytoplasm. The protein localises to the endoplasmic reticulum. It carries out the reaction a catechol + S-adenosyl-L-methionine = a guaiacol + S-adenosyl-L-homocysteine + H(+). Its function is as follows. Catalyzes the O-methylation, and thereby the inactivation, of catecholamine neurotransmitters and catechol hormones. Required for auditory function. Component of the cochlear hair cell's mechanotransduction (MET) machinery. Involved in the assembly of the asymmetric tip-link MET complex. Required for transportation of TMC1 and TMC2 proteins into the mechanically sensitive stereocilia of the hair cells. The function in MET is independent of the enzymatic activity. This chain is Transmembrane O-methyltransferase homolog, found in Rattus norvegicus (Rat).